The sequence spans 721 residues: Catalase-peroxidase (721 aa).

The segment at residues 89-212 (WHSAGTYRTG…LAAVQMGLIY (124 aa)) is a cross-link (tryptophyl-tyrosyl-methioninium (Trp-Tyr) (with M-238)). The Proton acceptor role is filled by His90. Positions 212-238 (YVNPEGPNGDPDPFAAAVDIRETFARM) form a cross-link, tryptophyl-tyrosyl-methioninium (Tyr-Met) (with W-89). His253 is a heme b binding site.

Belongs to the peroxidase family. Peroxidase/catalase subfamily. As to quaternary structure, homodimer or homotetramer. Requires heme b as cofactor. Formation of the three residue Trp-Tyr-Met cross-link is important for the catalase, but not the peroxidase activity of the enzyme.

The catalysed reaction is H2O2 + AH2 = A + 2 H2O. It catalyses the reaction 2 H2O2 = O2 + 2 H2O. Bifunctional enzyme with both catalase and broad-spectrum peroxidase activity. The protein is Catalase-peroxidase of Shewanella baltica (strain OS195).